Reading from the N-terminus, the 262-residue chain is Adenosylcobinamide-GDP ribazoletransferase (262 aa).

6 helical membrane-spanning segments follow: residues 43 to 63 (YFGL…WLTQ), 66 to 86 (LPAG…TGGF), 120 to 140 (GALA…ELAL), 146 to 166 (AGSA…SIIF), 191 to 211 (LLIL…LAAL), and 242 to 262 (AAQQ…GNIL).

The protein belongs to the CobS family. Mg(2+) serves as cofactor.

Its subcellular location is the cell inner membrane. It catalyses the reaction alpha-ribazole + adenosylcob(III)inamide-GDP = adenosylcob(III)alamin + GMP + H(+). The enzyme catalyses alpha-ribazole 5'-phosphate + adenosylcob(III)inamide-GDP = adenosylcob(III)alamin 5'-phosphate + GMP + H(+). It participates in cofactor biosynthesis; adenosylcobalamin biosynthesis; adenosylcobalamin from cob(II)yrinate a,c-diamide: step 7/7. Joins adenosylcobinamide-GDP and alpha-ribazole to generate adenosylcobalamin (Ado-cobalamin). Also synthesizes adenosylcobalamin 5'-phosphate from adenosylcobinamide-GDP and alpha-ribazole 5'-phosphate. This chain is Adenosylcobinamide-GDP ribazoletransferase, found in Shewanella baltica (strain OS185).